Consider the following 473-residue polypeptide: Glycine receptor subunit beta-type 4 (473 aa).

Residues 1–19 (MHSLFLKILIYSLMQCVLG) form the signal peptide. Topologically, residues 20 to 249 (QAEFWDYDEN…EFHVDREITH (230 aa)) are extracellular. N-linked (GlcNAc...) asparagine glycans are attached at residues Asn-29, Asn-105, and Asn-151. A disulfide bridge links Cys-166 with Cys-180. A helical membrane pass occupies residues 250–271 (HIIQSYIPTSLIVIISWFSFWL). Topologically, residues 272–276 (DVEAV) are cytoplasmic. A helical membrane pass occupies residues 277 to 297 (PGRVSLSITTLLTLATQSSAA). At 298-308 (RMALPQASDVK) the chain is on the extracellular side. A helical membrane pass occupies residues 309-329 (AIDVWMGTCMAFVFSAMIEFT). Over 330-439 (VVNYCVRRKV…NRKNAQKIDR (110 aa)) the chain is Cytoplasmic. Residues 440-460 (YSRALFPLAFIIFNIFYWIYY) form a helical membrane-spanning segment. The Extracellular portion of the chain corresponds to 461–473 (LKYAGSNSPELLL).

This sequence belongs to the ligand-gated ion channel (TC 1.A.9) family. Glycine receptor (TC 1.A.9.3) subfamily. In terms of assembly, pentamer.

It localises to the postsynaptic cell membrane. Its subcellular location is the synapse. It is found in the cell membrane. In terms of biological role, glycine receptors are ligand-gated chloride channels. Channel opening is triggered by extracellular glycine. Contributes to the generation of inhibitory postsynaptic currents. In Caenorhabditis elegans, this protein is Glycine receptor subunit beta-type 4.